Reading from the N-terminus, the 550-residue chain is (S)-beta-bisabolene synthase (550 aa).

4 residues coordinate Mg(2+): D303, D307, S451, and E455. The short motif at D303–D307 is the DDXXD motif element.

Belongs to the terpene synthase family. Tpsa subfamily. Requires Mg(2+) as cofactor. Mn(2+) serves as cofactor. As to expression, expressed only in young rhizomes. Not detected in leaves, roots and mature rhizomes.

The catalysed reaction is (2E,6E)-farnesyl diphosphate = (S)-beta-bisabolene + diphosphate. Functionally, sesquiterpene synthase involved in the biosynthesis of bisabolene. The polypeptide is (S)-beta-bisabolene synthase (TPS1) (Zingiber officinale (Ginger)).